The primary structure comprises 400 residues: Argininosuccinate synthase (400 aa).

Residues 10-18 (AYSGGVDTS) and alanine 38 each bind ATP. Tyrosine 89 lines the L-citrulline pocket. Residue glycine 119 coordinates ATP. The L-aspartate site is built by threonine 121, asparagine 125, and aspartate 126. Asparagine 125 is an L-citrulline binding site. 5 residues coordinate L-citrulline: arginine 129, serine 177, serine 186, glutamate 262, and tyrosine 274.

Belongs to the argininosuccinate synthase family. Type 1 subfamily. As to quaternary structure, homotetramer.

Its subcellular location is the cytoplasm. It carries out the reaction L-citrulline + L-aspartate + ATP = 2-(N(omega)-L-arginino)succinate + AMP + diphosphate + H(+). Its pathway is amino-acid biosynthesis; L-arginine biosynthesis; L-arginine from L-ornithine and carbamoyl phosphate: step 2/3. The sequence is that of Argininosuccinate synthase from Nostoc punctiforme (strain ATCC 29133 / PCC 73102).